Here is a 621-residue protein sequence, read N- to C-terminus: 1-deoxy-D-xylulose-5-phosphate synthase (621 aa).

Residues histidine 76 and 117 to 119 contribute to the thiamine diphosphate site; that span reads AHS. Aspartate 148 lines the Mg(2+) pocket. Residues 149–150, asparagine 178, tyrosine 285, and glutamate 367 contribute to the thiamine diphosphate site; that span reads GA. Asparagine 178 lines the Mg(2+) pocket.

This sequence belongs to the transketolase family. DXPS subfamily. Homodimer. Mg(2+) is required as a cofactor. The cofactor is thiamine diphosphate.

The catalysed reaction is D-glyceraldehyde 3-phosphate + pyruvate + H(+) = 1-deoxy-D-xylulose 5-phosphate + CO2. It functions in the pathway metabolic intermediate biosynthesis; 1-deoxy-D-xylulose 5-phosphate biosynthesis; 1-deoxy-D-xylulose 5-phosphate from D-glyceraldehyde 3-phosphate and pyruvate: step 1/1. Its function is as follows. Catalyzes the acyloin condensation reaction between C atoms 2 and 3 of pyruvate and glyceraldehyde 3-phosphate to yield 1-deoxy-D-xylulose-5-phosphate (DXP). In Aromatoleum aromaticum (strain DSM 19018 / LMG 30748 / EbN1) (Azoarcus sp. (strain EbN1)), this protein is 1-deoxy-D-xylulose-5-phosphate synthase.